The primary structure comprises 416 residues: MSIEIPAGLTELLQGFTVEVLRHQPADLLEFALQHFTRLQQENERKGAARFGHEGRTWGDAGAAAGGGTPSKGVNFAEEPMRSDSENGEEEEAAEAGAFNAPVINRFTRRASVCAEAYNPDEEEDDAESRIIHPKTDDQRNRLQEACKDILLFKNLDPEQMSQVLDAMFEKLVKEGEHVIDQGDDGDNFYVIDRGTFDIYVKCDGVGRCVGNYDNRGSFGELALMYNTPRAATITATSPGALWGLDRVTFRRIIVKNNAKKRKMYESFIESLPFLKSLEVSERLKVVDVIGTKVYNDGEQIIAQGDSADSFFIVESGEVRITMKRKGKSDIEENGAVEIARCLRGQYFGELALVTNKPRAASAHAIGTVKCLAMDVQAFERLLGPCMEIMKRNIATYEEQLVALFGTNMDIVEPTA.

Residues 2 to 151 are dimerization and phosphorylation; it reads SIEIPAGLTE…RLQEACKDIL (150 aa). The disordered stretch occupies residues 53-97; the sequence is HEGRTWGDAGAAAGGGTPSKGVNFAEEPMRSDSENGEEEEAAEAG. Position 69 is a phosphothreonine (T69). Phosphoserine is present on residues S83, S85, and S112. 3',5'-cyclic AMP-binding positions include 152–273, E221, R230, 274–416, E350, and R359; these read LFKN…ESLP and FLKS…EPTA.

The protein belongs to the cAMP-dependent kinase regulatory chain family. The inactive form of the enzyme is composed of two regulatory chains and two catalytic chains. Activation by cAMP produces two active catalytic monomers and a regulatory dimer that binds four cAMP molecules. Interacts with PRKACA and PRKACB. Interacts with the phosphorylated form of PJA2. Forms a complex composed of PRKAR2B, GSK3B and GSKIP through GSKIP interaction; facilitates PKA-induced phosphorylation and regulates GSK3B activity. Phosphorylated by the activated catalytic chain. Four types of regulatory chains are found: I-alpha, I-beta, II-alpha, and II-beta. Their expression varies among tissues and is in some cases constitutive and in others inducible. Brain. Present in a few pyramidal neurons and mostly in mossy fibers. Colocalizes with PJA2 in dentate granule cells and at postsynaptic sites of primary hippocampal neurons.

It is found in the cytoplasm. The protein localises to the cell membrane. Its function is as follows. Regulatory subunit of the cAMP-dependent protein kinases involved in cAMP signaling in cells. Type II regulatory chains mediate membrane association by binding to anchoring proteins, including the MAP2 kinase. In Rattus norvegicus (Rat), this protein is cAMP-dependent protein kinase type II-beta regulatory subunit (Prkar2b).